The sequence spans 430 residues: Adenylosuccinate synthetase (430 aa).

GTP-binding positions include 12 to 18 (GDEGKGK) and 40 to 42 (GHT). Residue aspartate 13 is the Proton acceptor of the active site. The Mg(2+) site is built by aspartate 13 and glycine 40. IMP contacts are provided by residues 13-16 (DEGK), 38-41 (NAGH), threonine 128, arginine 142, glutamine 223, threonine 238, and arginine 302. Histidine 41 (proton donor) is an active-site residue. Position 298–304 (298–304 (VNTGRKR)) interacts with substrate. Residues arginine 304, 330–332 (KLD), and 412–414 (GVG) each bind GTP.

This sequence belongs to the adenylosuccinate synthetase family. As to quaternary structure, homodimer. Mg(2+) serves as cofactor.

It is found in the cytoplasm. The catalysed reaction is IMP + L-aspartate + GTP = N(6)-(1,2-dicarboxyethyl)-AMP + GDP + phosphate + 2 H(+). It functions in the pathway purine metabolism; AMP biosynthesis via de novo pathway; AMP from IMP: step 1/2. Plays an important role in the de novo pathway of purine nucleotide biosynthesis. Catalyzes the first committed step in the biosynthesis of AMP from IMP. The protein is Adenylosuccinate synthetase of Corynebacterium aurimucosum (strain ATCC 700975 / DSM 44827 / CIP 107346 / CN-1) (Corynebacterium nigricans).